The primary structure comprises 119 residues: Large ribosomal subunit protein bL19 (119 aa).

This sequence belongs to the bacterial ribosomal protein bL19 family.

Functionally, this protein is located at the 30S-50S ribosomal subunit interface and may play a role in the structure and function of the aminoacyl-tRNA binding site. The protein is Large ribosomal subunit protein bL19 of Pseudoalteromonas translucida (strain TAC 125).